The following is a 266-amino-acid chain: Large ribosomal subunit protein eL8 (266 aa).

The span at 1 to 11 (MPKGKKAKGKK) shows a compositional bias: basic residues. The interval 1–21 (MPKGKKAKGKKVAPAPSVAKK) is disordered.

Belongs to the eukaryotic ribosomal protein eL8 family. Component of the large ribosomal subunit.

Its subcellular location is the cytoplasm. Functionally, component of the large ribosomal subunit. The ribosome is a large ribonucleoprotein complex responsible for the synthesis of proteins in the cell. In Ictalurus punctatus (Channel catfish), this protein is Large ribosomal subunit protein eL8 (rpl7a).